The chain runs to 129 residues: NADH-quinone oxidoreductase subunit K 2 (129 aa).

3 consecutive transmembrane segments (helical) span residues Leu3–Ala23, Ile28–Phe48, and Leu68–Val88. The interval Asp98–Ala129 is disordered. The segment covering Gly111–Ala122 has biased composition (low complexity).

This sequence belongs to the complex I subunit 4L family. In terms of assembly, NDH-1 is composed of 14 different subunits. Subunits NuoA, H, J, K, L, M, N constitute the membrane sector of the complex.

Its subcellular location is the cell membrane. The enzyme catalyses a quinone + NADH + 5 H(+)(in) = a quinol + NAD(+) + 4 H(+)(out). In terms of biological role, NDH-1 shuttles electrons from NADH, via FMN and iron-sulfur (Fe-S) centers, to quinones in the respiratory chain. The immediate electron acceptor for the enzyme in this species is believed to be a menaquinone. Couples the redox reaction to proton translocation (for every two electrons transferred, four hydrogen ions are translocated across the cytoplasmic membrane), and thus conserves the redox energy in a proton gradient. The sequence is that of NADH-quinone oxidoreductase subunit K 2 from Streptomyces avermitilis (strain ATCC 31267 / DSM 46492 / JCM 5070 / NBRC 14893 / NCIMB 12804 / NRRL 8165 / MA-4680).